An 86-amino-acid polypeptide reads, in one-letter code: Myosin light chain alkali (86 aa).

Residues 11–46 enclose the EF-hand domain; that stretch reads GCYEDFIECLKLYDKEENGTMMLAELQHALLALGES.

In terms of assembly, myosin is a hexamer of 2 heavy chains and 4 light chains.

The sequence is that of Myosin light chain alkali (Mlc1) from Drosophila subobscura (Fruit fly).